Consider the following 237-residue polypeptide: Ribitol-5-phosphate cytidylyltransferase (237 aa).

CTP-binding positions include 7-10 (LAGG), 81-87 (GSDRNES), and S112.

The protein belongs to the IspD/TarI cytidylyltransferase family. TarI subfamily.

It catalyses the reaction D-ribitol 5-phosphate + CTP + H(+) = CDP-L-ribitol + diphosphate. Its pathway is cell wall biogenesis; poly(ribitol phosphate) teichoic acid biosynthesis. Catalyzes the transfer of the cytidylyl group of CTP to D-ribitol 5-phosphate. The protein is Ribitol-5-phosphate cytidylyltransferase of Bacillus spizizenii (strain ATCC 23059 / NRRL B-14472 / W23) (Bacillus subtilis subsp. spizizenii).